Here is an 85-residue protein sequence, read N- to C-terminus: Large ribosomal subunit protein bL27 (85 aa).

The interval 1–22 (MAHKKAGGSTRNGRDSESKRLG) is disordered.

It belongs to the bacterial ribosomal protein bL27 family.

The sequence is that of Large ribosomal subunit protein bL27 from Marinomonas sp. (strain MWYL1).